Reading from the N-terminus, the 271-residue chain is 3-methyl-2-oxobutanoate hydroxymethyltransferase (271 aa).

The Mg(2+) site is built by Asp53 and Asp92. Residues 53–54 (DS), Asp92, and Lys120 each bind 3-methyl-2-oxobutanoate. Glu122 lines the Mg(2+) pocket. Residue Glu189 is the Proton acceptor of the active site.

Belongs to the PanB family. In terms of assembly, homodecamer; pentamer of dimers. Mg(2+) serves as cofactor.

It localises to the cytoplasm. The enzyme catalyses 3-methyl-2-oxobutanoate + (6R)-5,10-methylene-5,6,7,8-tetrahydrofolate + H2O = 2-dehydropantoate + (6S)-5,6,7,8-tetrahydrofolate. It participates in cofactor biosynthesis; (R)-pantothenate biosynthesis; (R)-pantoate from 3-methyl-2-oxobutanoate: step 1/2. Catalyzes the reversible reaction in which hydroxymethyl group from 5,10-methylenetetrahydrofolate is transferred onto alpha-ketoisovalerate to form ketopantoate. This Paraburkholderia phytofirmans (strain DSM 17436 / LMG 22146 / PsJN) (Burkholderia phytofirmans) protein is 3-methyl-2-oxobutanoate hydroxymethyltransferase.